A 106-amino-acid polypeptide reads, in one-letter code: SH3 domain-binding glutamic acid-rich-like protein 2 (106 aa).

Positions 61–67 (QGNPLPP) match the SH3-binding motif.

The protein belongs to the SH3BGR family.

The protein localises to the nucleus. This Xenopus tropicalis (Western clawed frog) protein is SH3 domain-binding glutamic acid-rich-like protein 2 (sh3bgrl2).